Consider the following 352-residue polypeptide: Divinyl chlorophyll a/b light-harvesting protein PcbH (352 aa).

A run of 6 helical transmembrane segments spans residues 27–47 (FIGS…ASCL), 88–108 (VATI…AGLA), 140–160 (FILG…VEWA), 202–222 (VMSG…FHIA), 242–262 (AVLS…AFWA), and 309–329 (LVNV…WHAL).

It belongs to the PsbB/PsbC family. IsiA/Pcb subfamily. As to quaternary structure, the antenna complex consists of divinyl chlorophylls (a and b) and divinyl chlorophyll a/b binding proteins and binds more divinyl chlorophyll b than does the antenna complex from high-light-adapted Prochlorococcus. Divinyl chlorophyll a is required as a cofactor. It depends on divinyl chlorophyll b as a cofactor.

The protein resides in the cellular thylakoid membrane. In terms of biological role, the antenna complex functions as a light receptor, it captures and delivers excitation energy to photosystems II and I. The Prochlorales pcb genes are not related to higher plant LHCs. This Prochlorococcus marinus (strain SARG / CCMP1375 / SS120) protein is Divinyl chlorophyll a/b light-harvesting protein PcbH (pcbH).